A 239-amino-acid chain; its full sequence is Ribosomal RNA small subunit methyltransferase G (239 aa).

S-adenosyl-L-methionine contacts are provided by residues Gly-77, Phe-82, 128–129 (AE), and Arg-146. The segment at 214–239 (IDKKRQTPKKYPRKPGTPNKTPLLEK) is disordered.

The protein belongs to the methyltransferase superfamily. RNA methyltransferase RsmG family.

It localises to the cytoplasm. Specifically methylates the N7 position of guanine in position 535 of 16S rRNA. The sequence is that of Ribosomal RNA small subunit methyltransferase G from Staphylococcus aureus (strain Mu3 / ATCC 700698).